A 368-amino-acid polypeptide reads, in one-letter code: DNA integrity scanning protein DisA (368 aa).

Residues 15 to 153 enclose the DAC domain; that stretch reads DERLRATLAA…DGRRHVLDEP (139 aa). ATP is bound by residues Gly-82, Leu-100, and 113-117; that span reads TRHRS. Positions 101-121 are disordered; the sequence is QPDPSIPTNESGTRHRSAERT. A compositionally biased stretch (basic and acidic residues) spans 112 to 121; the sequence is GTRHRSAERT.

It belongs to the DisA family. As to quaternary structure, homooctamer. Mg(2+) serves as cofactor.

It carries out the reaction 2 ATP = 3',3'-c-di-AMP + 2 diphosphate. Participates in a DNA-damage check-point. DisA forms globular foci that rapidly scan along the chromosomes searching for lesions. Functionally, also has diadenylate cyclase activity, catalyzing the condensation of 2 ATP molecules into cyclic di-AMP (c-di-AMP). c-di-AMP likely acts as a signaling molecule that may couple DNA integrity with a cellular process. The chain is DNA integrity scanning protein DisA from Acidothermus cellulolyticus (strain ATCC 43068 / DSM 8971 / 11B).